Here is a 97-residue protein sequence, read N- to C-terminus: Citrate lyase acyl carrier protein (97 aa).

The residue at position 14 (S14) is an O-(phosphoribosyl dephospho-coenzyme A)serine.

The protein belongs to the CitD family. Oligomer with a subunit composition of (alpha,beta,gamma)6.

It localises to the cytoplasm. Functionally, covalent carrier of the coenzyme of citrate lyase. This is Citrate lyase acyl carrier protein from Yersinia enterocolitica serotype O:8 / biotype 1B (strain NCTC 13174 / 8081).